The chain runs to 70 residues: Protease inhibitor HPI (70 aa).

Ala2 is subject to N-acetylalanine. Cys5 carries the post-translational modification S-glutathionyl cysteine; alternate.

This sequence belongs to the protease inhibitor I13 (potato type I serine protease inhibitor) family. As to quaternary structure, monomer and homodimer; disulfide-linked. Occurs in 3 forms that differ in the modification of Cys-5, HPI-1 forms a homodimer through a disulfide bond, HPI-2a is modified by glutathionylation, and HPI-2b is covalently modified by addition of an unidentified adduct but not by a disulfide linkage.

In terms of biological role, inhibitor of serine proteases, strongly inhibits subtilisin A and weakly inhibits trypsin. Does not inhibit chymotrypsin, papain, pepsin, pronase E, protease type XIII and thermolysin. HPI-1 inhibits subtilisin A with an Ki of 0.21 nM. HPI-2a inhibits subtilisin A with an Ki of 0.08 nM. HPI-2b inhibits subtilisin A with an Ki of 0.1 nM. The polypeptide is Protease inhibitor HPI (Hevea brasiliensis (Para rubber tree)).